The chain runs to 152 residues: Siroheme decarboxylase NirD subunit (152 aa).

This sequence belongs to the Ahb/Nir family. As to quaternary structure, probably forms a complex composed of NirD, NirL, NirG and NirH. All proteins are required for the total conversion of siroheme to didecarboxysiroheme.

It catalyses the reaction siroheme + 2 H(+) = 12,18-didecarboxysiroheme + 2 CO2. Its pathway is porphyrin-containing compound metabolism. Its function is as follows. Involved in heme d1 biosynthesis. Catalyzes the decarboxylation of siroheme into didecarboxysiroheme. The polypeptide is Siroheme decarboxylase NirD subunit (Stutzerimonas stutzeri (Pseudomonas stutzeri)).